A 74-amino-acid chain; its full sequence is Antimicrobial peptide 1 (74 aa).

Residues 1-22 form the signal peptide; that stretch reads MEIKYLLTVFLVLLIGSDYCQA. Lysine amide is present on Lys40. Residues 46 to 74 constitute a propeptide that is removed on maturation; it reads DLDGQIDRSRNFRKRDAELEELLSKLPIY.

As to expression, expressed by the venom gland.

It is found in the secreted. Its subcellular location is the target cell membrane. Has antibacterial activity against the Gram-positive bacteria S.aureus (MIC=20 uM), the Gram-negative bacteria E.coli (MIC=150 uM), and the yeast C.albicans (MIC=64 uM). Causes hemolysis on horse erythrocytes. The chain is Antimicrobial peptide 1 from Androctonus amoreuxi (African fattail scorpion).